We begin with the raw amino-acid sequence, 284 residues long: Bifunctional protein FolD (284 aa).

NADP(+)-binding positions include 164-166 and serine 189; that span reads GRS.

Belongs to the tetrahydrofolate dehydrogenase/cyclohydrolase family. As to quaternary structure, homodimer.

The enzyme catalyses (6R)-5,10-methylene-5,6,7,8-tetrahydrofolate + NADP(+) = (6R)-5,10-methenyltetrahydrofolate + NADPH. It catalyses the reaction (6R)-5,10-methenyltetrahydrofolate + H2O = (6R)-10-formyltetrahydrofolate + H(+). It functions in the pathway one-carbon metabolism; tetrahydrofolate interconversion. In terms of biological role, catalyzes the oxidation of 5,10-methylenetetrahydrofolate to 5,10-methenyltetrahydrofolate and then the hydrolysis of 5,10-methenyltetrahydrofolate to 10-formyltetrahydrofolate. The chain is Bifunctional protein FolD from Listeria welshimeri serovar 6b (strain ATCC 35897 / DSM 20650 / CCUG 15529 / CIP 8149 / NCTC 11857 / SLCC 5334 / V8).